Here is a 187-residue protein sequence, read N- to C-terminus: Potassium-transporting ATPase KdpC subunit (187 aa).

A helical transmembrane segment spans residues 11–31 (LILLMTVVTGALYPLAVTGIA).

The protein belongs to the KdpC family. As to quaternary structure, the system is composed of three essential subunits: KdpA, KdpB and KdpC.

Its subcellular location is the cell inner membrane. Its function is as follows. Part of the high-affinity ATP-driven potassium transport (or Kdp) system, which catalyzes the hydrolysis of ATP coupled with the electrogenic transport of potassium into the cytoplasm. This subunit acts as a catalytic chaperone that increases the ATP-binding affinity of the ATP-hydrolyzing subunit KdpB by the formation of a transient KdpB/KdpC/ATP ternary complex. In Pseudomonas entomophila (strain L48), this protein is Potassium-transporting ATPase KdpC subunit.